We begin with the raw amino-acid sequence, 86 residues long: Protein IDA-LIKE 1 (86 aa).

A signal peptide spans 1-27 (MNLSHKTMFMTLYIVFLLIFGSYNATA).

In terms of tissue distribution, expressed in roots.

The protein localises to the secreted. Its subcellular location is the extracellular space. Functionally, involved in an ethylene-independent separation step of floral abscission. May act with RLK5 and HSL2 as ligand-receptor pairs. The polypeptide is Protein IDA-LIKE 1 (IDL1) (Arabidopsis thaliana (Mouse-ear cress)).